Consider the following 439-residue polypeptide: Cobyrinate a,c-diamide synthase (439 aa).

The GATase cobBQ-type domain occupies 238-431 (KIAVAYDKAF…AHVNFLGNIE (194 aa)). The active-site Nucleophile is cysteine 320.

Belongs to the CobB/CbiA family. Mg(2+) is required as a cofactor.

It catalyses the reaction cob(II)yrinate + 2 L-glutamine + 2 ATP + 2 H2O = cob(II)yrinate a,c diamide + 2 L-glutamate + 2 ADP + 2 phosphate + 2 H(+). Its pathway is cofactor biosynthesis; adenosylcobalamin biosynthesis; cob(II)yrinate a,c-diamide from sirohydrochlorin (anaerobic route): step 10/10. Catalyzes the ATP-dependent amidation of the two carboxylate groups at positions a and c of cobyrinate, using either L-glutamine or ammonia as the nitrogen source. The chain is Cobyrinate a,c-diamide synthase from Clostridium tetani (strain Massachusetts / E88).